Here is a 156-residue protein sequence, read N- to C-terminus: ATP synthase subunit b (156 aa).

A helical membrane pass occupies residues 7 to 27 (LIVQMLVFVVFIGLTMKFIWP).

It belongs to the ATPase B chain family. In terms of assembly, F-type ATPases have 2 components, F(1) - the catalytic core - and F(0) - the membrane proton channel. F(1) has five subunits: alpha(3), beta(3), gamma(1), delta(1), epsilon(1). F(0) has three main subunits: a(1), b(2) and c(10-14). The alpha and beta chains form an alternating ring which encloses part of the gamma chain. F(1) is attached to F(0) by a central stalk formed by the gamma and epsilon chains, while a peripheral stalk is formed by the delta and b chains.

It localises to the cell inner membrane. Its function is as follows. F(1)F(0) ATP synthase produces ATP from ADP in the presence of a proton or sodium gradient. F-type ATPases consist of two structural domains, F(1) containing the extramembraneous catalytic core and F(0) containing the membrane proton channel, linked together by a central stalk and a peripheral stalk. During catalysis, ATP synthesis in the catalytic domain of F(1) is coupled via a rotary mechanism of the central stalk subunits to proton translocation. Functionally, component of the F(0) channel, it forms part of the peripheral stalk, linking F(1) to F(0). The polypeptide is ATP synthase subunit b (Coxiella burnetii (strain CbuK_Q154) (Coxiella burnetii (strain Q154))).